A 352-amino-acid chain; its full sequence is Divinyl chlorophyll a/b light-harvesting protein PcbA (352 aa).

Transmembrane regions (helical) follow at residues 27 to 47, 90 to 110, 142 to 162, 203 to 223, 243 to 263, and 306 to 326; these read FIAA…AFTL, VLAI…GGLL, FILG…VEWA, VMGG…WHIA, AVLS…AFWS, and LANV…WHAL.

It belongs to the PsbB/PsbC family. IsiA/Pcb subfamily. As to quaternary structure, the antenna complex consists of divinyl chlorophylls (a and b) and divinyl chlorophyll a/b binding proteins and binds less divinyl chlorophyll b than does low-light-adapted Prochlorococcus. Also forms complexes with PSII, consisting of a PSII dimer and 4 or 8 PcbA subunits. These complexes are also found under conditions of iron-starvation. The cofactor is divinyl chlorophyll a. It depends on divinyl chlorophyll b as a cofactor.

It is found in the cellular thylakoid membrane. Functionally, the antenna complex functions as a light receptor, it captures and delivers excitation energy to photosystem II and possibly to photosystem I. The Prochlorales pcb genes are not related to higher plant LHCs. The protein is Divinyl chlorophyll a/b light-harvesting protein PcbA (pcbA) of Prochlorococcus marinus subsp. pastoris (strain CCMP1986 / NIES-2087 / MED4).